The chain runs to 64 residues: Alpha-conotoxin-like Lp1.7 (64 aa).

A signal peptide spans Met-1–Ser-21. A propeptide spanning residues Phe-22–Arg-41 is cleaved from the precursor. Disulfide bonds link Cys-47–Cys-53 and Cys-48–Cys-61. Residues Asp-49–Pro-51 form a lacks the Ser-Xaa-Pro motif that is crucial for potent interaction with nAChR region.

This sequence belongs to the conotoxin A superfamily. As to expression, expressed by the venom duct.

It localises to the secreted. Its function is as follows. Alpha-conotoxins act on postsynaptic membranes, they bind to the nicotinic acetylcholine receptors (nAChR) and thus inhibit them. Has possibly a distinct nAChR binding mode from other alpha-conotoxins, due to a different three residue motif (lacks the Ser-Xaa-Pro motif). This chain is Alpha-conotoxin-like Lp1.7, found in Conus leopardus (Leopard cone).